A 213-amino-acid chain; its full sequence is uncharacterized protein (213 aa).

This is an uncharacterized protein from Saccharomyces cerevisiae (strain ATCC 204508 / S288c) (Baker's yeast).